The primary structure comprises 502 residues: Acetyl-coenzyme A carboxylase carboxyl transferase subunit beta, chloroplastic (502 aa).

Low complexity predominate over residues 191-202; sequence GSDSESSSIRTS. Residues 191–212 are disordered; it reads GSDSESSSIRTSGNDSNFNVRE. Residues 226–497 enclose the CoA carboxyltransferase N-terminal domain; the sequence is LWVQCENCYE…NQNSSGARGS (272 aa). Zn(2+) contacts are provided by cysteine 230, cysteine 233, cysteine 249, and cysteine 252. The C4-type zinc finger occupies 230–252; the sequence is CENCYELNYRSFFRSKMNICEQC.

The protein belongs to the AccD/PCCB family. In terms of assembly, acetyl-CoA carboxylase is a heterohexamer composed of biotin carboxyl carrier protein, biotin carboxylase and 2 subunits each of ACCase subunit alpha and ACCase plastid-coded subunit beta (accD). The cofactor is Zn(2+).

It is found in the plastid. The protein resides in the chloroplast stroma. It catalyses the reaction N(6)-carboxybiotinyl-L-lysyl-[protein] + acetyl-CoA = N(6)-biotinyl-L-lysyl-[protein] + malonyl-CoA. Its pathway is lipid metabolism; malonyl-CoA biosynthesis; malonyl-CoA from acetyl-CoA: step 1/1. In terms of biological role, component of the acetyl coenzyme A carboxylase (ACC) complex. Biotin carboxylase (BC) catalyzes the carboxylation of biotin on its carrier protein (BCCP) and then the CO(2) group is transferred by the transcarboxylase to acetyl-CoA to form malonyl-CoA. The protein is Acetyl-coenzyme A carboxylase carboxyl transferase subunit beta, chloroplastic of Chloranthus spicatus (Chulantree).